Consider the following 215-residue polypeptide: Probable transaldolase (215 aa).

The active-site Schiff-base intermediate with substrate is the K83.

Belongs to the transaldolase family. Type 3B subfamily.

Its subcellular location is the cytoplasm. The catalysed reaction is D-sedoheptulose 7-phosphate + D-glyceraldehyde 3-phosphate = D-erythrose 4-phosphate + beta-D-fructose 6-phosphate. It participates in carbohydrate degradation; pentose phosphate pathway; D-glyceraldehyde 3-phosphate and beta-D-fructose 6-phosphate from D-ribose 5-phosphate and D-xylulose 5-phosphate (non-oxidative stage): step 2/3. Its function is as follows. Transaldolase is important for the balance of metabolites in the pentose-phosphate pathway. The polypeptide is Probable transaldolase (tal) (Clostridium acetobutylicum (strain ATCC 824 / DSM 792 / JCM 1419 / IAM 19013 / LMG 5710 / NBRC 13948 / NRRL B-527 / VKM B-1787 / 2291 / W)).